The following is a 702-amino-acid chain: Phosphoribosylformylglycinamidine synthase subunit PurL (702 aa).

H36 is a catalytic residue. Residues Y39 and K80 each contribute to the ATP site. A Mg(2+)-binding site is contributed by E82. Residues S83–H86 and R105 contribute to the substrate site. Catalysis depends on H84, which acts as the Proton acceptor. D106 serves as a coordination point for Mg(2+). Q225 contacts substrate. D251 contacts Mg(2+). Residue E293–Q295 participates in substrate binding. The ATP site is built by D468 and G505. S508 provides a ligand contact to substrate.

This sequence belongs to the FGAMS family. In terms of assembly, monomer. Part of the FGAM synthase complex composed of 1 PurL, 1 PurQ and 2 PurS subunits.

It localises to the cytoplasm. The catalysed reaction is N(2)-formyl-N(1)-(5-phospho-beta-D-ribosyl)glycinamide + L-glutamine + ATP + H2O = 2-formamido-N(1)-(5-O-phospho-beta-D-ribosyl)acetamidine + L-glutamate + ADP + phosphate + H(+). The protein operates within purine metabolism; IMP biosynthesis via de novo pathway; 5-amino-1-(5-phospho-D-ribosyl)imidazole from N(2)-formyl-N(1)-(5-phospho-D-ribosyl)glycinamide: step 1/2. In terms of biological role, part of the phosphoribosylformylglycinamidine synthase complex involved in the purines biosynthetic pathway. Catalyzes the ATP-dependent conversion of formylglycinamide ribonucleotide (FGAR) and glutamine to yield formylglycinamidine ribonucleotide (FGAM) and glutamate. The FGAM synthase complex is composed of three subunits. PurQ produces an ammonia molecule by converting glutamine to glutamate. PurL transfers the ammonia molecule to FGAR to form FGAM in an ATP-dependent manner. PurS interacts with PurQ and PurL and is thought to assist in the transfer of the ammonia molecule from PurQ to PurL. The protein is Phosphoribosylformylglycinamidine synthase subunit PurL of Metallosphaera sedula (strain ATCC 51363 / DSM 5348 / JCM 9185 / NBRC 15509 / TH2).